The following is a 163-amino-acid chain: Nucleotide-binding protein BBR47_25280 (163 aa).

The protein belongs to the YajQ family.

Its function is as follows. Nucleotide-binding protein. The sequence is that of Nucleotide-binding protein BBR47_25280 from Brevibacillus brevis (strain 47 / JCM 6285 / NBRC 100599).